We begin with the raw amino-acid sequence, 473 residues long: MKTLYSLRRFYPVETLFNGTLALAGRDQETTGFAWWAGNARLINLSGKLLGAHVAHAGLIVFWAGAMNLFEVAHFVPEKPMYEQGLILLPHLATLGWGVGPGGEVIDTFPYFVSGVLHLISSAVLGFGGIYHALLGPETLEESFPFFGYVWKDRNKMTTILGIHLILLGIGAFLLVFKALYFGGVYDTWAPGGGDVRKITNLTLSPSVIFGYLLKSPFGGEGWIVSVDDLEDIVGGHVWLGSICILGGIWHILTKPFAWARRALVWSGEAYLSYSLGALSVFGFIACCFVWFNNTAYPSEFYGPTGPEASQAQAFTFLVRDQRLGANIGSAQGPTGLGKYLMRSPTGEVIFGGETMRFWDLRAPWLEPLRGPNGLDLSRLKKDIQPWQERRSAEYMTHAPLGSLNSVGGVATEINAVNYVSPRSWLATSHFVLGFFLFVGHLWHAGRARAAAAGFEKGIDRDFEPVLFMTPLN.

A propeptide spanning residues 1-14 (MKTLYSLRRFYPVE) is cleaved from the precursor. Residue Thr-15 is modified to N-acetylthreonine. Thr-15 is modified (phosphothreonine). A run of 5 helical transmembrane segments spans residues 69–93 (LFEV…PHLA), 134–155 (LLGP…KDRN), 178–200 (KALY…RKIT), 255–275 (KPFA…LSYS), and 291–312 (WFNN…ASQA). Glu-367 provides a ligand contact to [CaMn4O5] cluster. Residues 447-471 (RARAAAAGFEKGIDRDFEPVLFMTP) traverse the membrane as a helical segment.

This sequence belongs to the PsbB/PsbC family. PsbC subfamily. In terms of assembly, PSII is composed of 1 copy each of membrane proteins PsbA, PsbB, PsbC, PsbD, PsbE, PsbF, PsbH, PsbI, PsbJ, PsbK, PsbL, PsbM, PsbT, PsbX, PsbY, PsbZ, Psb30/Ycf12, at least 3 peripheral proteins of the oxygen-evolving complex and a large number of cofactors. It forms dimeric complexes. Binds multiple chlorophylls and provides some of the ligands for the Ca-4Mn-5O cluster of the oxygen-evolving complex. It may also provide a ligand for a Cl- that is required for oxygen evolution. PSII binds additional chlorophylls, carotenoids and specific lipids. is required as a cofactor.

It is found in the plastid. The protein resides in the chloroplast thylakoid membrane. In terms of biological role, one of the components of the core complex of photosystem II (PSII). It binds chlorophyll and helps catalyze the primary light-induced photochemical processes of PSII. PSII is a light-driven water:plastoquinone oxidoreductase, using light energy to abstract electrons from H(2)O, generating O(2) and a proton gradient subsequently used for ATP formation. This chain is Photosystem II CP43 reaction center protein, found in Cucumis sativus (Cucumber).